The chain runs to 93 residues: Putative pterin-4-alpha-carbinolamine dehydratase (93 aa).

The protein belongs to the pterin-4-alpha-carbinolamine dehydratase family.

The enzyme catalyses (4aS,6R)-4a-hydroxy-L-erythro-5,6,7,8-tetrahydrobiopterin = (6R)-L-erythro-6,7-dihydrobiopterin + H2O. The polypeptide is Putative pterin-4-alpha-carbinolamine dehydratase (Trichormus variabilis (strain ATCC 29413 / PCC 7937) (Anabaena variabilis)).